A 360-amino-acid polypeptide reads, in one-letter code: MHLTRLNIERVRNLKTVALHGLQPFNVFYGANGSGKTSILEAIHLLATGRSFRTHIPKNYIQYEADDAIVFAQSATEKIGMQKLASGEQLMKVNGDTVATQGQLAKLLPLQHIDPQSTDIIDHGAKPRRQLLDWLMFHVEPEFYFAWQYYSRALKQRNTLLKTRRNLSLADLEPWNKMLSDYGEILHSQRLSIVEQWNVYFQNDLSQLLPDLEIELEYSPGFHTEQGLMQDLLNQHQKDIERRYTEYGPHRADLRLKTPFGHADDVLSRGQKKLLIIALKLSQIAMLHASNKETVVLLDDLTAELDLTAQQRLIERLSQLGSQVFMTTLDHASVKKHLHDLSISYQLFSVESGQVSLAAS.

30-37 provides a ligand contact to ATP; that stretch reads GANGSGKT.

Belongs to the RecF family.

It is found in the cytoplasm. The RecF protein is involved in DNA metabolism; it is required for DNA replication and normal SOS inducibility. RecF binds preferentially to single-stranded, linear DNA. It also seems to bind ATP. This is DNA replication and repair protein RecF from Acinetobacter baumannii (strain ATCC 17978 / DSM 105126 / CIP 53.77 / LMG 1025 / NCDC KC755 / 5377).